The following is a 713-amino-acid chain: Mitochondrial intermediate peptidase (713 aa).

The transit peptide at 1–35 (MLCVGRLGGLGARAAALPPRRAGRGILEAGIRARR) directs the protein to the mitochondrion. Lysine 126 carries the N6-acetyllysine modification. Position 495 (histidine 495) interacts with Zn(2+). The active site involves glutamate 496. Residues histidine 499 and histidine 502 each contribute to the Zn(2+) site.

It belongs to the peptidase M3 family. In terms of assembly, monomer. Requires Zn(2+) as cofactor.

The protein resides in the mitochondrion matrix. It carries out the reaction Release of an N-terminal octapeptide as second stage of processing of some proteins imported into the mitochondrion.. Activity is divalent cation-dependent. It is stimulated by manganese, magnesium or calcium ions and reversibly inhibited by zinc, cobalt and iron. Cleaves proteins, imported into the mitochondrion, to their mature size. This chain is Mitochondrial intermediate peptidase (MIPEP), found in Pongo abelii (Sumatran orangutan).